The following is a 160-amino-acid chain: Phosphopantetheine adenylyltransferase (160 aa).

Position 11 (Thr-11) interacts with substrate. ATP contacts are provided by residues Thr-11 to Phe-12 and His-19. Lys-43, Leu-75, and Arg-89 together coordinate substrate. ATP-binding positions include Gly-90–Arg-92, Glu-100, and His-125–Ser-131.

This sequence belongs to the bacterial CoaD family. As to quaternary structure, homohexamer. Mg(2+) serves as cofactor.

The protein localises to the cytoplasm. The catalysed reaction is (R)-4'-phosphopantetheine + ATP + H(+) = 3'-dephospho-CoA + diphosphate. It functions in the pathway cofactor biosynthesis; coenzyme A biosynthesis; CoA from (R)-pantothenate: step 4/5. Its function is as follows. Reversibly transfers an adenylyl group from ATP to 4'-phosphopantetheine, yielding dephospho-CoA (dPCoA) and pyrophosphate. This Methylobacillus flagellatus (strain ATCC 51484 / DSM 6875 / VKM B-1610 / KT) protein is Phosphopantetheine adenylyltransferase.